The following is a 542-amino-acid chain: Glucose-6-phosphate isomerase (542 aa).

The active-site Proton donor is glutamate 354. Catalysis depends on residues histidine 385 and lysine 505.

This sequence belongs to the GPI family.

The protein resides in the cytoplasm. It carries out the reaction alpha-D-glucose 6-phosphate = beta-D-fructose 6-phosphate. It participates in carbohydrate biosynthesis; gluconeogenesis. The protein operates within carbohydrate degradation; glycolysis; D-glyceraldehyde 3-phosphate and glycerone phosphate from D-glucose: step 2/4. Its function is as follows. Catalyzes the reversible isomerization of glucose-6-phosphate to fructose-6-phosphate. This is Glucose-6-phosphate isomerase from Nitrosospira multiformis (strain ATCC 25196 / NCIMB 11849 / C 71).